A 476-amino-acid chain; its full sequence is Adenosylhomocysteinase (476 aa).

3 residues coordinate substrate: T67, D142, and E202. T203–T205 is a binding site for NAD(+). Substrate is bound by residues K232 and D236. NAD(+) contacts are provided by residues N237, G266 to G271, E289, N324, I345 to H347, and N390.

It belongs to the adenosylhomocysteinase family. It depends on NAD(+) as a cofactor.

The protein resides in the cytoplasm. The catalysed reaction is S-adenosyl-L-homocysteine + H2O = L-homocysteine + adenosine. It participates in amino-acid biosynthesis; L-homocysteine biosynthesis; L-homocysteine from S-adenosyl-L-homocysteine: step 1/1. Its function is as follows. May play a key role in the regulation of the intracellular concentration of adenosylhomocysteine. The protein is Adenosylhomocysteinase of Synechococcus sp. (strain CC9902).